The following is a 347-amino-acid chain: Selenide, water dikinase (347 aa).

Residue Cys-17 is part of the active site. ATP-binding positions include Lys-20 and 48-50 (TRD). Asp-51 contributes to the Mg(2+) binding site. ATP-binding positions include Asp-68, Asp-91, and 139-141 (GHS). A Mg(2+)-binding site is contributed by Asp-91. Residue Asp-227 coordinates Mg(2+).

Belongs to the selenophosphate synthase 1 family. Class I subfamily. Homodimer. It depends on Mg(2+) as a cofactor.

The catalysed reaction is hydrogenselenide + ATP + H2O = selenophosphate + AMP + phosphate + 2 H(+). Its function is as follows. Synthesizes selenophosphate from selenide and ATP. The polypeptide is Selenide, water dikinase (Salmonella typhi).